Reading from the N-terminus, the 104-residue chain is Replication restart protein PriB (104 aa).

One can recognise an SSB domain in the interval 2 to 101 (TNRLVLSGTV…LHAEQIELID (100 aa)). The cysteines at positions 48 and 80 are disulfide-linked. Residues 82–89 (KAKNGLSK) carry the L45 loop motif.

The protein belongs to the PriB family. As to quaternary structure, homodimer. Primosome assembly occurs via a 'hand-off' mechanism. PriA binds to replication forks, subsequently PriB then DnaT bind; DnaT then displaces ssDNA to generate the helicase loading substrate, which allows DnaC to load helicase DnaB onto the fork. ssDNA is displaced from the PriB-ssDNA complex by DnaT. In a PriA-PriB-replication fork structure, movement of the PriA CRR domain exposes a surface to which PriB binds and contacts ssDNA emerging from the PriA pore. Binds PriA; binding is improved in the presence of ssDNA. Weakly binds DnaT; binding is improved in the presence of ssDNA; as DnaT levels increase PriB dissociates from ssDNA. Component of the replication restart primosome, which is composed of PriA, PriB, PriC, DnaB and DnaT; DnaG primase associates transiently with this complex. Component of the preprimosomal complex composed of one monomer of PriC and DnaT, two monomers of PriA, two dimers of PriB and one hexamer of DnaB. Post-translationally, an intersubunit disulfide bond is seen in some crystals.

Functionally, involved in the restart of stalled replication forks, which reloads the replicative helicase (DnaB) on sites other than the origin of replication; the PriA-PriB pathway is the major replication restart pathway. There are several restart pathways, the PriA-PriB pathway is subdivided into 2 distinct pathways. priB and priC have redundant roles in the cell. During primosome assembly it facilitates complex formation between PriA and DnaT on DNA; stabilizes PriA on DNA, presumably by preventing or inhibiting PriA DNA translocation activity. Forms a branched DNA-PriA-PriB complex when the lagging strand is single-stranded (ss)DNA. Binds ssDNA in the presence and absence of ssDNA DNA-binding protein (SSB), does not bind branched structures. DNA binding, forming spiral filaments on ssDNA, is cooperative. Stimulates the helicase activity of PriA. The homodimer binds 12 nucleotides of ssDNA. Binds homo-pyrimidine tracts better than homo-purine tracts. Genetic interactions among priB, dam, lexA, nagC, polA, rdgB, rdgB, rep and uup link the PriA-PriB replication restart pathway to DNA double-strand break repair. In Escherichia coli (strain K12), this protein is Replication restart protein PriB.